A 261-amino-acid chain; its full sequence is Triosephosphate isomerase (261 aa).

Residue 10–12 coordinates substrate; sequence NWK. Catalysis depends on histidine 100, which acts as the Electrophile. Glutamate 172 functions as the Proton acceptor in the catalytic mechanism. Substrate-binding positions include glycine 178, serine 218, and 239–240; that span reads GG.

The protein belongs to the triosephosphate isomerase family. As to quaternary structure, homodimer.

The protein resides in the cytoplasm. The enzyme catalyses D-glyceraldehyde 3-phosphate = dihydroxyacetone phosphate. It participates in carbohydrate biosynthesis; gluconeogenesis. The protein operates within carbohydrate degradation; glycolysis; D-glyceraldehyde 3-phosphate from glycerone phosphate: step 1/1. In terms of biological role, involved in the gluconeogenesis. Catalyzes stereospecifically the conversion of dihydroxyacetone phosphate (DHAP) to D-glyceraldehyde-3-phosphate (G3P). This Mycobacteroides abscessus (strain ATCC 19977 / DSM 44196 / CCUG 20993 / CIP 104536 / JCM 13569 / NCTC 13031 / TMC 1543 / L948) (Mycobacterium abscessus) protein is Triosephosphate isomerase.